The following is a 146-amino-acid chain: Snake venom vascular endothelial growth factor toxin TfsvVEGF (146 aa).

The first 24 residues, 1–24 (MAAYLLAVAILFCIQGWPSGTVQG), serve as a signal peptide directing secretion. Pyrrolidone carboxylic acid is present on Q25. Cystine bridges form between C38/C80, C69/C115, and C73/C117. Residues 118–139 (RPRSPGDVNNGKDKRNPEEGGP) show a composition bias toward basic and acidic residues. Residues 118–146 (RPRSPGDVNNGKDKRNPEEGGPRARFPFV) form a disordered region.

It belongs to the PDGF/VEGF growth factor family. Snake venom VEGF subfamily. Homodimer; disulfide-linked. Interacts with VEGF receptor-1 (FLT1) with a high affinity, whereas it binds to VEGF receptor-2 (KDR) with a low affinity. Does not bind VEGF receptor-3 (FLT4). In terms of tissue distribution, expressed by the venom gland.

It is found in the secreted. Snake venom VEGFs may contribute to venom dispersion and prey subjugation by inducing vascular permeability and hypotension. This protein strongly increases vascular permeability, and weakly stimulates angiogenesis. Interacts with VEGF receptor-1 (FLT1) with a high affinity, whereas it binds to VEGF receptor-2 (KDR) with a low affinity. Stimulates autophosphorylation of VEGF receptor-1 (VEGFR-1/FLT1), and VEGF receptor-2 (VEGFR-2/KDR). The polypeptide is Snake venom vascular endothelial growth factor toxin TfsvVEGF (Protobothrops flavoviridis (Habu)).